A 409-amino-acid chain; its full sequence is LL-diaminopimelate aminotransferase (409 aa).

The substrate site is built by Tyr-15 and Gly-42. Pyridoxal 5'-phosphate contacts are provided by residues Tyr-72, 108-109 (AK), Tyr-132, Asn-186, Tyr-217, and 245-247 (SFS). Substrate contacts are provided by Lys-109, Tyr-132, and Asn-186. N6-(pyridoxal phosphate)lysine is present on Lys-248. Residues Arg-256 and Asn-291 each coordinate pyridoxal 5'-phosphate. Substrate contacts are provided by Asn-291 and Arg-386.

Belongs to the class-I pyridoxal-phosphate-dependent aminotransferase family. LL-diaminopimelate aminotransferase subfamily. In terms of assembly, homodimer. Pyridoxal 5'-phosphate serves as cofactor.

The catalysed reaction is (2S,6S)-2,6-diaminopimelate + 2-oxoglutarate = (S)-2,3,4,5-tetrahydrodipicolinate + L-glutamate + H2O + H(+). It participates in amino-acid biosynthesis; L-lysine biosynthesis via DAP pathway; LL-2,6-diaminopimelate from (S)-tetrahydrodipicolinate (aminotransferase route): step 1/1. Involved in the synthesis of meso-diaminopimelate (m-DAP or DL-DAP), required for both lysine and peptidoglycan biosynthesis. Catalyzes the direct conversion of tetrahydrodipicolinate to LL-diaminopimelate. The chain is LL-diaminopimelate aminotransferase from Desulforapulum autotrophicum (strain ATCC 43914 / DSM 3382 / VKM B-1955 / HRM2) (Desulfobacterium autotrophicum).